The primary structure comprises 393 residues: Actin-related protein 2 (393 aa).

Residues 158–160 (GDG), 212–216 (RQMKE), and 303–308 (GGTTMY) contribute to the ATP site.

Belongs to the actin family. ARP2 subfamily. Component of the Arp2/3 complex.

Its subcellular location is the cytoplasm. It localises to the cytoskeleton. Functions as ATP-binding component of the Arp2/3 complex which is involved in regulation of actin polymerization and together with an activating nucleation-promoting factor (NPF) mediates the formation of branched actin networks. Seems to contact the pointed end of the daughter actin filament. This Caenorhabditis briggsae protein is Actin-related protein 2 (arx-2).